A 300-amino-acid chain; its full sequence is 4-diphosphocytidyl-2-C-methyl-D-erythritol kinase (300 aa).

The active site involves Lys-12. 94–104 (PAQAGIGGGSS) contacts ATP. Residue Asp-136 is part of the active site.

This sequence belongs to the GHMP kinase family. IspE subfamily.

The enzyme catalyses 4-CDP-2-C-methyl-D-erythritol + ATP = 4-CDP-2-C-methyl-D-erythritol 2-phosphate + ADP + H(+). The protein operates within isoprenoid biosynthesis; isopentenyl diphosphate biosynthesis via DXP pathway; isopentenyl diphosphate from 1-deoxy-D-xylulose 5-phosphate: step 3/6. In terms of biological role, catalyzes the phosphorylation of the position 2 hydroxy group of 4-diphosphocytidyl-2C-methyl-D-erythritol. In Verminephrobacter eiseniae (strain EF01-2), this protein is 4-diphosphocytidyl-2-C-methyl-D-erythritol kinase.